Here is a 317-residue protein sequence, read N- to C-terminus: Transaldolase (317 aa).

Lysine 132 acts as the Schiff-base intermediate with substrate in catalysis.

This sequence belongs to the transaldolase family. Type 1 subfamily. In terms of assembly, homodimer.

It is found in the cytoplasm. The enzyme catalyses D-sedoheptulose 7-phosphate + D-glyceraldehyde 3-phosphate = D-erythrose 4-phosphate + beta-D-fructose 6-phosphate. The protein operates within carbohydrate degradation; pentose phosphate pathway; D-glyceraldehyde 3-phosphate and beta-D-fructose 6-phosphate from D-ribose 5-phosphate and D-xylulose 5-phosphate (non-oxidative stage): step 2/3. In terms of biological role, transaldolase is important for the balance of metabolites in the pentose-phosphate pathway. The chain is Transaldolase from Yersinia enterocolitica serotype O:8 / biotype 1B (strain NCTC 13174 / 8081).